The chain runs to 441 residues: Glutamate-1-semialdehyde 2,1-aminomutase (441 aa).

Lysine 276 is modified (N6-(pyridoxal phosphate)lysine).

It belongs to the class-III pyridoxal-phosphate-dependent aminotransferase family. HemL subfamily. In terms of assembly, homodimer. Pyridoxal 5'-phosphate serves as cofactor.

The protein resides in the cytoplasm. The enzyme catalyses (S)-4-amino-5-oxopentanoate = 5-aminolevulinate. It functions in the pathway porphyrin-containing compound metabolism; protoporphyrin-IX biosynthesis; 5-aminolevulinate from L-glutamyl-tRNA(Glu): step 2/2. The polypeptide is Glutamate-1-semialdehyde 2,1-aminomutase (Rhodococcus jostii (strain RHA1)).